A 790-amino-acid chain; its full sequence is Cadherin-6 (790 aa).

The N-terminal stretch at 1–18 (MRTYRYFLLLFWVGQPYP) is a signal peptide. A propeptide spanning residues 19 to 53 (TFSNPLSKRTSGFPAKRKALELSANSRNELSRSKR) is cleaved from the precursor. 5 Cadherin domains span residues 54 to 159 (SWMW…EPIF), 160 to 268 (TKDV…PPRF), 269 to 383 (PQST…PPVF), 384 to 486 (SKLA…DNAP), and 487 to 608 (EFAE…LIHP). Residues 54 to 615 (SWMWNQFFLL…IHPTGLSTGA (562 aa)) lie on the Extracellular side of the membrane. Asparagine 255 carries an N-linked (GlcNAc...) asparagine glycan. The segment at 260–291 (DVNDNPPRFPQSTYQFKTPESSPPGTPIGRIK) is disordered. Residues 269–279 (PQSTYQFKTPE) show a composition bias toward polar residues. N-linked (GlcNAc...) asparagine glycosylation is found at asparagine 399, asparagine 437, asparagine 455, and asparagine 536. The helical transmembrane segment at 616 to 636 (LVAILLCIVILLVTVVLFAAL) threads the bilayer. The Cytoplasmic portion of the chain corresponds to 637 to 790 (RRQRKKEPLI…YGGMDSDKDS (154 aa)). Phosphoserine occurs at positions 786 and 790.

The protein localises to the cell membrane. Its function is as follows. Cadherins are calcium-dependent cell adhesion proteins. They preferentially interact with themselves in a homophilic manner in connecting cells; cadherins may thus contribute to the sorting of heterogeneous cell types. This Mus musculus (Mouse) protein is Cadherin-6 (Cdh6).